The chain runs to 183 residues: dCTP deaminase (183 aa).

Residues 106–111 (KSTYAR), 130–132 (TLE), Gln-151, Tyr-165, and Gln-175 contribute to the dCTP site. Glu-132 functions as the Proton donor/acceptor in the catalytic mechanism.

Belongs to the dCTP deaminase family. In terms of assembly, homotrimer.

It catalyses the reaction dCTP + H2O + H(+) = dUTP + NH4(+). Its pathway is pyrimidine metabolism; dUMP biosynthesis; dUMP from dCTP (dUTP route): step 1/2. Functionally, catalyzes the deamination of dCTP to dUTP. This is dCTP deaminase from Acidobacterium capsulatum (strain ATCC 51196 / DSM 11244 / BCRC 80197 / JCM 7670 / NBRC 15755 / NCIMB 13165 / 161).